A 555-amino-acid polypeptide reads, in one-letter code: Dihydroxy-acid dehydratase (555 aa).

Position 80 (Asp80) interacts with Mg(2+). Cys121 lines the [2Fe-2S] cluster pocket. Asp122 and Lys123 together coordinate Mg(2+). The residue at position 123 (Lys123) is an N6-carboxylysine. Cys193 provides a ligand contact to [2Fe-2S] cluster. Glu444 contacts Mg(2+). Residue Ser470 is the Proton acceptor of the active site.

Belongs to the IlvD/Edd family. Homodimer. The cofactor is [2Fe-2S] cluster. Requires Mg(2+) as cofactor.

The enzyme catalyses (2R)-2,3-dihydroxy-3-methylbutanoate = 3-methyl-2-oxobutanoate + H2O. It catalyses the reaction (2R,3R)-2,3-dihydroxy-3-methylpentanoate = (S)-3-methyl-2-oxopentanoate + H2O. Its pathway is amino-acid biosynthesis; L-isoleucine biosynthesis; L-isoleucine from 2-oxobutanoate: step 3/4. It participates in amino-acid biosynthesis; L-valine biosynthesis; L-valine from pyruvate: step 3/4. Functions in the biosynthesis of branched-chain amino acids. Catalyzes the dehydration of (2R,3R)-2,3-dihydroxy-3-methylpentanoate (2,3-dihydroxy-3-methylvalerate) into 2-oxo-3-methylpentanoate (2-oxo-3-methylvalerate) and of (2R)-2,3-dihydroxy-3-methylbutanoate (2,3-dihydroxyisovalerate) into 2-oxo-3-methylbutanoate (2-oxoisovalerate), the penultimate precursor to L-isoleucine and L-valine, respectively. The chain is Dihydroxy-acid dehydratase from Aquifex aeolicus (strain VF5).